The sequence spans 268 residues: Tryptophan synthase alpha chain (268 aa).

Catalysis depends on proton acceptor residues E49 and D60.

This sequence belongs to the TrpA family. In terms of assembly, tetramer of two alpha and two beta chains.

The catalysed reaction is (1S,2R)-1-C-(indol-3-yl)glycerol 3-phosphate + L-serine = D-glyceraldehyde 3-phosphate + L-tryptophan + H2O. Its pathway is amino-acid biosynthesis; L-tryptophan biosynthesis; L-tryptophan from chorismate: step 5/5. The alpha subunit is responsible for the aldol cleavage of indoleglycerol phosphate to indole and glyceraldehyde 3-phosphate. This is Tryptophan synthase alpha chain from Pseudomonas aeruginosa (strain ATCC 15692 / DSM 22644 / CIP 104116 / JCM 14847 / LMG 12228 / 1C / PRS 101 / PAO1).